Here is a 165-residue protein sequence, read N- to C-terminus: UPF0303 protein Bxeno_A1932 (165 aa).

The protein belongs to the UPF0303 family.

The sequence is that of UPF0303 protein Bxeno_A1932 from Paraburkholderia xenovorans (strain LB400).